The chain runs to 396 residues: Putative nickel insertion protein (396 aa).

Belongs to the LarC family.

This is Putative nickel insertion protein from Wolinella succinogenes (strain ATCC 29543 / DSM 1740 / CCUG 13145 / JCM 31913 / LMG 7466 / NCTC 11488 / FDC 602W) (Vibrio succinogenes).